We begin with the raw amino-acid sequence, 182 residues long: UPF0215 protein Pcal_0119 (182 aa).

This sequence belongs to the UPF0215 family.

This is UPF0215 protein Pcal_0119 from Pyrobaculum calidifontis (strain DSM 21063 / JCM 11548 / VA1).